A 118-amino-acid chain; its full sequence is Vesicle-associated membrane protein 1 (118 aa).

Residues 1–15 (MSAPAQPPAEGTEGA) are compositionally biased toward low complexity. Positions 1-38 (MSAPAQPPAEGTEGAAPGGGPPGPPPNTTSNRRLQQTQ) are disordered. Residues 1 to 96 (MSAPAQPPAE…KRKYWWKNCK (96 aa)) lie on the Cytoplasmic side of the membrane. Residues 28 to 38 (TTSNRRLQQTQ) show a composition bias toward polar residues. Residues 33 to 93 (RLQQTQAQVE…AKLKRKYWWK (61 aa)) enclose the v-SNARE coiled-coil homology domain. Ser63 carries the phosphoserine modification. A helical; Anchor for type IV membrane protein membrane pass occupies residues 97-116 (MMIMLGAICAIIVVVIVIYI). The Vesicular portion of the chain corresponds to 117-118 (FT).

Belongs to the synaptobrevin family. As to quaternary structure, interacts with VAPA and VAPB. Post-translationally, (Microbial infection) Targeted and hydrolyzed by C.botulinum neurotoxin type D (BoNT/D, botD) which hydrolyzes the 61-Lys-|-Leu-62 bond and inhibits neurotransmitter release. This is a poor substrate for BoNT/D, high concentrations are required to cleave it in vitro. In terms of processing, (Microbial infection) Targeted and hydrolyzed by C.botulinum neurotoxin type F (BoNT/F, botF) which hydrolyzes the 60-Gln-|-Lys-61 bond and inhibits neurotransmitter release. As to expression, expressed in brain and spleen (at protein level). Isoform 1 expressed at very high level in brain. Even higher level found in spinal cord. Isoform 3 expressed in kidney, spleen and liver. Isoforms 2 and 3 expressed in osteoblasts of trabecular bone. Also expressed in heart.

The protein resides in the cytoplasmic vesicle. The protein localises to the secretory vesicle. Its subcellular location is the synaptic vesicle membrane. It localises to the synapse. It is found in the synaptosome. The protein resides in the cytoplasmic vesicle membrane. The protein localises to the mitochondrion outer membrane. Involved in the targeting and/or fusion of transport vesicles to their target membrane. This chain is Vesicle-associated membrane protein 1 (Vamp1), found in Rattus norvegicus (Rat).